Consider the following 3957-residue polypeptide: MMNEDAAQKSDSGEKFNGSSQRRKRPKKSDSNASFLRAARAGNLDKVVEYLKGGIDINTCNQNGLNALHLAAKEGHVGLVQELLGRGSSVDSATKKGNTALHIASLAGQAEVVKVLVKEGANINAQSQNGFTPLYMAAQENHIDVVKYLLENGANQSTATEDGFTPLAVALQQGHNQAVAILLENDTKGKVRLPALHIAARKDDTKSAALLLQNDHNADVQSKMMVNRTTESGFTPLHIAAHYGNVNVATLLLNRGAAVDFTARNGITPLHVASKRGNTNMVKLLLDRGGQIDAKTRDGLTPLHCAARSGHDQVVELLLERGAPLLARTKNGLSPLHMAAQGDHVECVKHLLQHKAPVDDVTLDYLTALHVAAHCGHYRVTKLLLDKRANPNARALNGFTPLHIACKKNRIKVMELLVKYGASIQAITESGLTPIHVAAFMGHLNIVLLLLQNGASPDVTNIRGETALHMAARAGQVEVVRCLLRNGALVDARAREEQTPLHIASRLGKTEIVQLLLQHMAHPDAATTNGYTPLHISAREGQVDVASVLLEAGAAHSLATKKGFTPLHVAAKYGSLDVAKLLLQRRAAADSAGKNGLTPLHVAAHYDNQKVALLLLEKGASPHATAKNGYTPLHIAAKKNQMQIASTLLNYGAETNIVTKQGVTPLHLASQEGHTDMVTLLLDKGANIHMSTKSGLTSLHLAAQEDKVNVADILTKHGADQDAHTKLGYTPLIVACHYGNVKMVNFLLKQGANVNAKTKNGYTPLHQAAQQGHTHIINVLLQHGAKPNATTANGNTALAIAKRLGYISVVDTLKVVTEEVTTTTTTITEKHKLNVPETMTEVLDVSDEEGDDTMTGDGGEYLRPEDLKELGDDSLPSSQFLDGMNYLRYSLEGGRSDSLRSFSSDRSHTLSHASYLRDSAVMDDSVVIPSHQVSTLAKEAERNSYRLSWGTENLDNVALSSSPIHSGFLVSFMVDARGGAMRGCRHNGLRIIIPPRKCTAPTRVTCRLVKRHRLATMPPMVEGEGLASRLIEVGPSGAQFLGKLHLPTAPPPLNEGESLVSRILQLGPPGTKFLGPVIVEIPHFAALRGKERELVVLRSENGDSWKEHFCDYTEDELNEILNGMDEVLDSPEDLEKKRICRIITRDFPQYFAVVSRIKQDSNLIGPEGGVLSSTVVPQVQAVFPEGALTKRIRVGLQAQPMHSELVKKILGNKATFSPIVTLEPRRRKFHKPITMTIPVPKASSDVMLNGFGGDAPTLRLLCSITGGTTPAQWEDITGTTPLTFVNECVSFTTNVSARFWLIDCRQIQESVTFASQVYREIICVPYMAKFVVFAKSHDPIEARLRCFCMTDDKVDKTLEQQENFAEVARSRDVEVLEGKPIYVDCFGNLVPLTKSGQHHIFSFFAFKENRLPLFVKVRDTTQEPCGRLSFMKEPKSTRGLVHQAICNLNITLPIYTKESESDQEQEEEIDMTSEKNDETESTETSVLKSHLVNEVPVLASPDLLSEVSEMKQDLIKMTAILTTDVSDKAGSIKVKELVKAAEEEPGEPFEIVERVKEDLEKVNEILRSGTCTRDESSVQSSRSERGLVEEEWVIVSDEEIEEARQKAPLEITEYPCVEVRIDKEIKGKVEKDSTGLVNYLTDDLNTCVPLPKEQLQTVQDKAGKKCEALAVGRSSEKEGKDIPPDETQSTQKQHKPSLGIKKPVRRKLKEKQKQKEEGLQASAEKAELKKGSSEESLGEDPGLAPEPLPTVKATSPLIEETPIGSIKDKVKALQKRVEDEQKGRSKLPIRVKGKEDVPKKTTHRPHPAASPSLKSERHAPGSPSPKTERHSTLSSSAKTERHPPVSPSSKTEKHSPVSPSAKTERHSPASSSSKTEKHSPVSPSTKTERHSPVSSTKTERHPPVSPSGKTDKRPPVSPSGRTEKHPPVSPGRTEKRLPVSPSGRTDKHQPVSTAGKTEKHLPVSPSGKTEKQPPVSPTSKTERIEETMSVRELMKAFQSGQDPSKHKTGLFEHKSAKQKQPQEKGKVRVEKEKGPILTQREAQKTENQTIKRGQRLPVTGTAESKRGVRVSSIGVKKEDAAGGKEKVLSHKIPEPVQSVPEEESHRESEVPKEKMADEQGDMDLQISPDRKTSTDFSEVIKQELEDNDKYQQFRLSEETEKAQLHLDQVLTSPFNTTFPLDYMKDEFLPALSLQSGALDGSSESLKNEGVAGSPCGSLMEGTPQISSEESYKHEGLAETPETSPESLSFSPKKSEEQTGETKESTKTETTTEIRSEKEHPTTKDITGGSEERGATVTEDSETSTESFQKEATLGSPKDTSPKRQDDCTGSCSVALAKETPTGLTEEAACDEGQRTFGSSAHKTQTDSEVQESTATSDETKALPLPEASVKTDTGTESKPQGVIRSPQGLELALPSRDSEVLSAVADDSLAVSHKDSLEASPVLEDNSSHKTPDSLEPSPLKESPCRDSLESSPVEPKMKAGIFPSHFPLPAAVAKTELLTEVASVRSRLLRDPDGSAEDDSLEQTSLMESSGKSPLSPDTPSSEEVSYEVTPKTTDVSTPKPAVIHECAEEDDSENGEKKRFTPEEEMFKMVTKIKMFDELEQEAKQKRDYKKEPKQEESSSSSDPDADCSVDVDEPKHTGSGEDESGVPVLVTSESRKVSSSSESEPELAQLKKGADSGLLPEPVIRVQPPSPLPSSMDSNSSPEEVQFQPVVSKQYTFKMNEDTQEEPGKSEEEKDSESHLAEDRHAVSTEAEDRSYDKLNRDTDQPKICDGHGCEAMSPSSSAAPVSSGLQSPTGDDVDEQPVIYKESLALQGTHEKDTEGEELDVSRAESPQADCPSESFSSSSSLPHCLVSEGKELDEDISATSSIQKTEVTKTDETFENLPKDCPSQDSSITTQTDRFSMDVPVSDLAENDEIYDPQITSPYENVPSQSFFSSEESKTQTDANHTTSFHSSEVYSVTITSPVEDVVVASSSSGTVLSKESNFEGQDIKMESQQESTLWEMQSDSVSSSFEPTMSATTTVVGEQISKVIITKTDVDSDSWSEIREDDEAFEARVKEEEQKIFGLMVDRQSQGTTPDTTPARTPTEEGTPTSEQNPFLFQEGKLFEMTRSGAIDMTKRSYADESFHFFQIGQESREETLSEDVKEGATGADPLPLETSAESLALSESKETVDDEADLLPDDVSEEVEEIPASDAQLNSQMGISASTETPTKEAVSVGTKDLPTVQTGDIPPLSGVKQISCPDSSEPAVQVQLDFSTLTRSVYSDRGDDSPDSSPEEQKSVIEIPTAPMENVPFTESKSKIPVRTMPTSTPAPPSAEYESSVSEDFLSSVDEENKADEAKPKSKLPVKVPLQRVEQQLSDLDTSVQKTVAPQGQDMASIAPDNRSKSESDASSLDSKTKCPVKTRSYTETETESRERAEELELESEEGATRPKILTSRLPVKSRSTTSSCRGGTSPTKESKEHFFDLYRNSIEFFEEISDEASKLVDRLTQSEREQEIVSDDESSSALEVSVIENLPPVETEHSVPEDIFDTRPIWDESIETLIERIPDENGHDHAEDPQDEQERIEERLAYIADHLGFSWTELARELDFTEEQIHQIRIENPNSLQDQSHALLKYWLERDGKHATDTNLVECLTKINRMDIVHLMETNTEPLQERISHSYAEIEQTITLDHSEGFSVLQEELCTAQHKQKEEQAVSKESETCDHPPIVSEEDISVGYSTFQDGVPKTEGDSSATALFPQTHKEQVQQDFSGKMQDLPEESSLEYQQEYFVTTPGTETSETQKAMIVPSSPSKTPEEVSTPAEEEKLYLQTPTSSERGGSPIIQEPEEPSEHREESSPRKTSLVIVESADNQPETCERLDEDAAFEKGDDMPEIPPETVTEEEYIDEHGHTVVKKVTRKIIRRYVSSEGTEKEEIMVQGMPQEPVNIEEGDGYSKVIKRVVLKSDTEQSEDNNE.

Residues 1 to 14 are compositionally biased toward basic and acidic residues; it reads MMNEDAAQKSDSGE. The disordered stretch occupies residues 1–34; the sequence is MMNEDAAQKSDSGEKFNGSSQRRKRPKKSDSNAS. ANK repeat units follow at residues 30–62, 63–92, 96–125, 129–158, 162–191, 193–220, 232–261, 265–294, 298–327, 331–360, 364–393, 397–426, 430–459, 463–492, 496–525, 529–558, 562–591, 595–624, 628–657, 661–690, 694–723, 727–756, 760–789, and 793–822; these read DSNA…TCNQ, NGLN…SVDS, KGNT…NINA, NGFT…NQST, DGFT…KGKV, LPAL…NADV, SGFT…AVDF, NGIT…QIDA, DGLT…PLLA, NGLS…PVDD, DYLT…NPNA, NGFT…SIQA, SGLT…SPDV, RGET…LVDA, EEQT…HPDA, NGYT…AHSL, KGFT…AADS, NGLT…SPHA, NGYT…ETNI, QGVT…NIHM, SGLT…DQDA, LGYT…NVNA, NGYT…KPNA, and NGNT…EVTT. Phosphoserine is present on residues Ser-31 and Ser-34. Tyr-378 carries the phosphotyrosine modification. The residue at position 531 (Tyr-531) is a Phosphotyrosine. Residue Ser-846 is modified to Phosphoserine. At Thr-853 the chain carries Phosphothreonine. At Ser-874 the chain carries Phosphoserine. Positions 966-1125 are interaction with SPTBN1; sequence SGFLVSFMVD…ELNEILNGMD (160 aa). ZU5 domains are found at residues 968–1156 and 1158–1304; these read FLVS…VVSR and KQDS…LIDC. Residues 1289 to 1423 form a UPA domain region; that stretch reads VSFTTNVSAR…FVKVRDTTQE (135 aa). The residue at position 1382 (Tyr-1382) is a Phosphotyrosine. The Death 1 domain maps to 1450–1535; sequence ITLPIYTKES…SDKAGSIKVK (86 aa). Residues 1457–1486 are disordered; sequence KESESDQEQEEEIDMTSEKNDETESTETSV. A phosphoserine mark is found at Ser-1459, Ser-1461, Ser-1473, Ser-1500, and Ser-1596. The segment covering 1461–1471 has biased composition (acidic residues); sequence SDQEQEEEIDM. Disordered stretches follow at residues 1670-2137, 2197-2411, 2430-2484, 2507-2586, 2604-2852, 2864-2904, and 2923-2951; these read AVGR…TDFS, ALDG…GLEL, AVSH…GIFP, SRLL…TPEE, EAKQ…SLPH, DISA…TDRF, and QITS…ANHT. Composition is skewed to basic and acidic residues over residues 1674-1683 and 1711-1733; these read SSEKEGKDIP and KQKQ…KGSS. 3 positions are modified to phosphoserine: Ser-1732, Ser-1733, and Ser-1736. The segment covering 1766-1783 has biased composition (basic and acidic residues); sequence IKDKVKALQKRVEDEQKG. Repeat A repeat units lie at residues 1806-1817, 1818-1829, 1830-1841, 1842-1853, 1854-1865, 1866-1877, and 1878-1889; these read HPAASPSLKSER, HAPGSPSPKTER, HSTLSSSAKTER, HPPVSPSSKTEK, HSPVSPSAKTER, HSPASSSSKTEK, and HSPVSPSTKTER. A repeat-rich region region spans residues 1806–1983; the sequence is HPAASPSLKS…PVSPTSKTER (178 aa). Phosphoserine is present on residues Ser-1855 and Ser-1858. 2 stretches are compositionally biased toward basic and acidic residues: residues 1886–1902 and 1921–1937; these read KTER…ERHP and RTEK…EKRL. The stretch at 1890-1900 is one Repeat A; approximate repeat; sequence HSPVSSTKTER. 2 Repeat A repeats span residues 1901-1912 and 1913-1924; these read HPPVSPSGKTDK and RPPVSPSGRTEK. Residues 1925–1935 form a Repeat A; approximate repeat; sequence HPPVSPGRTEK. Ser-1929 is modified (phosphoserine). Repeat A repeat units follow at residues 1936–1947, 1948–1959, 1960–1971, and 1972–1983; these read RLPVSPSGRTDK, HQPVSTAGKTEK, HLPVSPSGKTEK, and QPPVSPTSKTER. Basic and acidic residues-rich tracts occupy residues 1980–1994, 2003–2034, 2075–2093, and 2102–2117; these read KTER…RELM, PSKH…KEKG, VKKE…HKIP, and EESH…KMAD. Ser-2127 is subject to Phosphoserine. Basic and acidic residues predominate over residues 2128-2137; the sequence is PDRKTSTDFS. Residue Thr-2239 is modified to Phosphothreonine. Residues 2240–2251 show a composition bias toward polar residues; sequence PETSPESLSFSP. A Phosphoserine modification is found at Ser-2243. Residues 2252 to 2282 are compositionally biased toward basic and acidic residues; sequence KKSEEQTGETKESTKTETTTEIRSEKEHPTT. Thr-2269 carries the post-translational modification Phosphothreonine. Ser-2275 carries the post-translational modification Phosphoserine. Polar residues predominate over residues 2355-2376; the sequence is TFGSSAHKTQTDSEVQESTATS. Phosphoserine is present on residues Ser-2405, Ser-2440, Ser-2454, Ser-2516, and Ser-2521. Residues 2523 to 2545 show a composition bias toward polar residues; that stretch reads EQTSLMESSGKSPLSPDTPSSEE. 2 stretches are compositionally biased toward basic and acidic residues: residues 2576–2586 and 2604–2619; these read NGEKKRFTPEE and EAKQ…KQEE. Residue Thr-2583 is modified to Phosphothreonine. Ser-2679 and Ser-2701 each carry phosphoserine. The span at 2696–2705 shows a compositional bias: low complexity; sequence PSSMDSNSSP. Over residues 2729-2776 the composition is skewed to basic and acidic residues; sequence EPGKSEEEKDSESHLAEDRHAVSTEAEDRSYDKLNRDTDQPKICDGHG. Phosphoserine is present on residues Ser-2781 and Ser-2795. The span at 2781-2791 shows a compositional bias: low complexity; the sequence is SPSSSAAPVSS. Residues 2892-2903 are compositionally biased toward polar residues; sequence SQDSSITTQTDR. Position 2956 is a phosphoserine (Ser-2956). Disordered regions lie at residues 2987-3016, 3069-3099, and 3136-3462; these read NFEG…SSFE, LMVD…SEQN, and QESR…PTKE. A compositionally biased stretch (polar residues) spans 2998–3016; that stretch reads QQESTLWEMQSDSVSSSFE. Residue Ser-3075 is modified to Phosphoserine. At Thr-3078 the chain carries Phosphothreonine. Residues 3078 to 3087 show a composition bias toward low complexity; the sequence is TTPDTTPART. The span at 3090–3099 shows a compositional bias: polar residues; it reads EEGTPTSEQN. The segment covering 3137–3149 has biased composition (basic and acidic residues); sequence ESREETLSEDVKE. The segment covering 3157-3169 has biased composition (low complexity); sequence LPLETSAESLALS. Positions 3175–3194 are enriched in acidic residues; sequence VDDEADLLPDDVSEEVEEIP. 2 stretches are compositionally biased toward polar residues: residues 3198–3212 and 3256–3265; these read AQLN…STET and LDFSTLTRSV. Phosphoserine occurs at positions 3273, 3276, and 3277. The span at 3335–3344 shows a compositional bias: basic and acidic residues; that stretch reads EENKADEAKP. Positions 3357 to 3374 are enriched in polar residues; that stretch reads VEQQLSDLDTSVQKTVAP. Phosphoserine occurs at positions 3390 and 3409. Basic and acidic residues predominate over residues 3409–3423; the sequence is SYTETETESRERAEE. Residues 3446 to 3460 show a composition bias toward low complexity; sequence SRSTTSSCRGGTSPT. Ser-3474 carries the phosphoserine modification. The region spanning 3569–3653 is the Death 2 domain; that stretch reads IEERLAYIAD…DIVHLMETNT (85 aa). Ser-3735 is subject to Phosphoserine. Phosphothreonine is present on residues Thr-3776, Thr-3797, Thr-3803, and Thr-3814. The interval 3777–3858 is disordered; the sequence is PGTETSETQK…VESADNQPET (82 aa). Residue Ser-3823 is modified to Phosphoserine. The segment covering 3832-3841 has biased composition (basic and acidic residues); the sequence is PSEHREESSP. Ser-3909 carries the phosphoserine modification.

Interacts with RHBG and SPTBN1. Colocalizes with Na/K ATPase, Na/Ca exchanger and SPTBN1. Directly interacts with DMD; this interaction is necessary for DMD localization at the sarcolemma. Interacts with DCTN4; this interaction is required for DCTN4 retention at costameres. Identified in complexes that contain VIM, EZR, AHNAK, BFSP1, BFSP2, ANK2, PLEC, PRX and spectrin. Interacts (via death domain) with RABGAP1L (via Rab-GAP TBC domain). Post-translationally, phosphorylated at multiple sites by different protein kinases and each phosphorylation event regulates the protein's structure and function. As to expression, present in plasma membrane of neurons as well as glial cells throughout the brain. Expressed in fetal brain and in temporal cortex of adult brain. Also expressed in the inner segments of rod photoreceptors in retina.

The protein localises to the cytoplasm. The protein resides in the cytoskeleton. Its subcellular location is the membrane. It localises to the myofibril. It is found in the sarcomere. The protein localises to the m line. The protein resides in the apical cell membrane. Its subcellular location is the cell membrane. It localises to the postsynaptic cell membrane. It is found in the early endosome. The protein localises to the recycling endosome. The protein resides in the lysosome. Its subcellular location is the mitochondrion. It localises to the z line. It is found in the sarcolemma. The protein localises to the T-tubule. Its function is as follows. Plays an essential role in the localization and membrane stabilization of ion transporters and ion channels in several cell types, including cardiomyocytes, as well as in striated muscle cells. In skeletal muscle, required for proper localization of DMD and DCTN4 and for the formation and/or stability of a special subset of microtubules associated with costameres and neuromuscular junctions. In cardiomyocytes, required for coordinate assembly of Na/Ca exchanger, SLC8A1/NCX1, Na/K ATPases ATP1A1 and ATP1A2 and inositol 1,4,5-trisphosphate (InsP3) receptors at sarcoplasmic reticulum/sarcolemma sites. Required for expression and targeting of SPTBN1 in neonatal cardiomyocytes and for the regulation of neonatal cardiomyocyte contraction rate. In the inner segment of rod photoreceptors, required for the coordinated expression of the Na/K ATPase, Na/Ca exchanger and beta-2-spectrin (SPTBN1). Plays a role in endocytosis and intracellular protein transport. Associates with phosphatidylinositol 3-phosphate (PI3P)-positive organelles and binds dynactin to promote long-range motility of cells. Recruits RABGAP1L to (PI3P)-positive early endosomes, where RABGAP1L inactivates RAB22A, and promotes polarized trafficking to the leading edge of the migrating cells. Part of the ANK2/RABGAP1L complex which is required for the polarized recycling of fibronectin receptor ITGA5 ITGB1 to the plasma membrane that enables continuous directional cell migration. The chain is Ankyrin-2 (ANK2) from Homo sapiens (Human).